The following is a 144-amino-acid chain: Large ribosomal subunit protein uL16 (144 aa).

Residues 1–14 (MLMPKRVKYRKPHR) show a composition bias toward basic residues. The tract at residues 1–25 (MLMPKRVKYRKPHRPGTQGKATRGN) is disordered.

Belongs to the universal ribosomal protein uL16 family. As to quaternary structure, part of the 50S ribosomal subunit.

In terms of biological role, binds 23S rRNA and is also seen to make contacts with the A and possibly P site tRNAs. In Moorella thermoacetica (strain ATCC 39073 / JCM 9320), this protein is Large ribosomal subunit protein uL16.